The sequence spans 161 residues: Putative pre-16S rRNA nuclease (161 aa).

The protein belongs to the YqgF nuclease family.

It is found in the cytoplasm. In terms of biological role, could be a nuclease involved in processing of the 5'-end of pre-16S rRNA. This is Putative pre-16S rRNA nuclease from Methylocella silvestris (strain DSM 15510 / CIP 108128 / LMG 27833 / NCIMB 13906 / BL2).